Reading from the N-terminus, the 313-residue chain is Porphobilinogen deaminase (313 aa).

Cys-242 bears the S-(dipyrrolylmethanemethyl)cysteine mark.

The protein belongs to the HMBS family. As to quaternary structure, monomer. Requires dipyrromethane as cofactor.

The enzyme catalyses 4 porphobilinogen + H2O = hydroxymethylbilane + 4 NH4(+). Its pathway is porphyrin-containing compound metabolism; protoporphyrin-IX biosynthesis; coproporphyrinogen-III from 5-aminolevulinate: step 2/4. Its function is as follows. Tetrapolymerization of the monopyrrole PBG into the hydroxymethylbilane pre-uroporphyrinogen in several discrete steps. The chain is Porphobilinogen deaminase from Pseudomonas fluorescens (strain SBW25).